A 207-amino-acid chain; its full sequence is ATP synthase subunit b 2 (207 aa).

The helical transmembrane segment at 53 to 72 (TYASQLLWLVITFSVFYLLM) threads the bilayer.

It belongs to the ATPase B chain family. F-type ATPases have 2 components, F(1) - the catalytic core - and F(0) - the membrane proton channel. F(1) has five subunits: alpha(3), beta(3), gamma(1), delta(1), epsilon(1). F(0) has three main subunits: a(1), b(2) and c(10-14). The alpha and beta chains form an alternating ring which encloses part of the gamma chain. F(1) is attached to F(0) by a central stalk formed by the gamma and epsilon chains, while a peripheral stalk is formed by the delta and b chains.

The protein resides in the cell inner membrane. Its function is as follows. F(1)F(0) ATP synthase produces ATP from ADP in the presence of a proton or sodium gradient. F-type ATPases consist of two structural domains, F(1) containing the extramembraneous catalytic core and F(0) containing the membrane proton channel, linked together by a central stalk and a peripheral stalk. During catalysis, ATP synthesis in the catalytic domain of F(1) is coupled via a rotary mechanism of the central stalk subunits to proton translocation. Component of the F(0) channel, it forms part of the peripheral stalk, linking F(1) to F(0). The b'-subunit is a diverged and duplicated form of b found in plants and photosynthetic bacteria. The sequence is that of ATP synthase subunit b 2 (atpF2) from Rhizobium etli (strain CIAT 652).